The chain runs to 192 residues: Signal peptidase complex catalytic subunit sec11 (192 aa).

Residues 1–18 lie on the Cytoplasmic side of the membrane; that stretch reads MLSFLSSNLSSTRQSLAQ. The helical; Signal-anchor for type II membrane protein transmembrane segment at 19-39 threads the bilayer; sequence VLNFALVLSTAFMLWKGLSVF. Over 40–192 the chain is Lumenal; sequence TASSSPIVVV…GLMVILQREQ (153 aa). Residues Ser-53, His-92, and Asp-133 each act as charge relay system in the active site. The C-terminal short (CTS) helix stretch occupies residues 177–188; it reads VLLGIMGLMVIL.

The protein belongs to the peptidase S26B family. In terms of assembly, component of the signal peptidase complex (SPC) composed of a catalytic subunit SEC11 and three accessory subunits SPC1, SPC2 and SPC3. The complex induces a local thinning of the ER membrane which is used to measure the length of the signal peptide (SP) h-region of protein substrates. This ensures the selectivity of the complex towards h-regions shorter than 18-20 amino acids. SPC associates with the translocon complex.

It is found in the endoplasmic reticulum membrane. The enzyme catalyses Cleavage of hydrophobic, N-terminal signal or leader sequences from secreted and periplasmic proteins.. Catalytic component of the signal peptidase complex (SPC) which catalyzes the cleavage of N-terminal signal sequences from nascent proteins as they are translocated into the lumen of the endoplasmic reticulum. Specifically cleaves N-terminal signal peptides that contain a hydrophobic alpha-helix (h-region) shorter than 18-20 amino acids. The chain is Signal peptidase complex catalytic subunit sec11 (sec11) from Aspergillus clavatus (strain ATCC 1007 / CBS 513.65 / DSM 816 / NCTC 3887 / NRRL 1 / QM 1276 / 107).